The chain runs to 372 residues: O-glycoside alpha-1,2-mannosyltransferase homolog 2 (372 aa).

At 1-6 (MRISRL) the chain is on the cytoplasmic side. A helical; Signal-anchor for type II membrane protein transmembrane segment spans residues 7–27 (LIRVLLGFVILFITYILFPSI). At 28–372 (PKALVNTLNV…NLTNEDYDEL (345 aa)) the chain is on the lumenal side. Glu271 serves as the catalytic Nucleophile.

The protein belongs to the glycosyltransferase 15 family.

The protein localises to the endoplasmic reticulum membrane. Functionally, probable mannosyltransferase involved in O-glycosylation of cell wall and secreted proteins. In Schizosaccharomyces pombe (strain 972 / ATCC 24843) (Fission yeast), this protein is O-glycoside alpha-1,2-mannosyltransferase homolog 2 (omh2).